Consider the following 200-residue polypeptide: NADH-quinone oxidoreductase subunit C (200 aa).

The protein belongs to the complex I 30 kDa subunit family. In terms of assembly, NDH-1 is composed of 14 different subunits. Subunits NuoB, C, D, E, F, and G constitute the peripheral sector of the complex.

The protein resides in the cell inner membrane. The catalysed reaction is a quinone + NADH + 5 H(+)(in) = a quinol + NAD(+) + 4 H(+)(out). In terms of biological role, NDH-1 shuttles electrons from NADH, via FMN and iron-sulfur (Fe-S) centers, to quinones in the respiratory chain. The immediate electron acceptor for the enzyme in this species is believed to be ubiquinone. Couples the redox reaction to proton translocation (for every two electrons transferred, four hydrogen ions are translocated across the cytoplasmic membrane), and thus conserves the redox energy in a proton gradient. The chain is NADH-quinone oxidoreductase subunit C from Rhizobium etli (strain ATCC 51251 / DSM 11541 / JCM 21823 / NBRC 15573 / CFN 42).